A 778-amino-acid polypeptide reads, in one-letter code: DNA repair protein crb2 (778 aa).

Residues 35–56 form a disordered region; the sequence is KVNASINPSPPRSNDNSNKEFS. Position 73 is a phosphothreonine; by ATM (Thr73). The residue at position 80 (Ser80) is a Phosphoserine; by ATM. Residues 141–245 are interaction with rad4; it reads VSNSSQILSP…PPAFLPETSE (105 aa). Phosphothreonine is present on Thr187. Position 215 is a phosphothreonine; by cdc2 (Thr215). A Phosphothreonine modification is found at Thr235. Residues 358–493 form a tudor-like region; the sequence is SRRSFKNRVL…RRFQGRDLSF (136 aa). The segment at 370–404 is interaction with dimethylated histone H4; the sequence is FKGYPSFYYPATLVAPVHSAVTSSIMYKVQFDDAT. The region spanning 535-653 is the BRCT domain; the sequence is SNQLIFDDCV…RVVDFSPYLL (119 aa).

In terms of assembly, homodimer. Dimerization is mediated via the BRCT domain. Interacts (via BRCT domain) with rad3. Interacts with rad4 (via BRCT1,2 domains); a single rad4 molecule interacts simultaneously with both Thr-187 phosphorylation sites in a crb2 dimer. Interacts (via Tudor domain) with histone H4K20me2. Interacts (via BRCT dmain) with histone H2AS128ph (gamma-H2A). Interacts with chk1. Interacts with sad1. Post-translationally, phosphorylation of Thr-73 and Ser-80 by rad3/ATM promotes interaction with chk1. Phosphorylation at Thr-187 is dependent on phosphorylation at Thr-215 and Thr-235. Phosphorylation at Thr-215 and Thr-235 may prime the non-canonical Thr-187 site for cdc2/CDK phosphorylation.

It is found in the nucleus. Functionally, essential for cell cycle arrest at the G1 and G2 stages following DNA damage by X-, and UV-irradiation, or inactivation of DNA ligase. Plays a role in the response to DNA damage. Interaction with rad4 via its phosphorylation sites in the N-terminus couples the DNA checkpoint apparatus to chromatin via interaction of its C-terminal BRCT domains with epigenetic modifications on histones H4 and H2A, respectively, in the G1/S phase of the cell cycle, and facilitates recruitment of the checkpoint kinase chk1. The protein is DNA repair protein crb2 of Schizosaccharomyces pombe (strain 972 / ATCC 24843) (Fission yeast).